A 665-amino-acid polypeptide reads, in one-letter code: LisH domain-containing protein ARMC9 (665 aa).

A LisH domain is found at 7 to 39 (HESELLGLVKEYLDFAEFEDTLKTFSKECKIKG). Positions 201–235 (ENGQSNKEMLQQLHQQLVEAERRSMTYLKRYNKIQ) form a coiled coil. A Phosphoserine modification is found at serine 582. Positions 642-665 (VQWSGDEPLQRPVTPGGHRNGYPV) are disordered.

As to quaternary structure, interacts with TOGARAM1, CCDC66, CEP104, CSPP1 and CEP290. Interacts with NDUFAF2.

It localises to the cytoplasm. Its subcellular location is the cytoskeleton. It is found in the cilium basal body. The protein localises to the cell projection. The protein resides in the cilium. It localises to the microtubule organizing center. Its subcellular location is the centrosome. It is found in the centriole. Functionally, involved in ciliogenesis. It is required for appropriate acetylation and polyglutamylation of ciliary microtubules, and regulation of cilium length. Acts as a positive regulator of hedgehog (Hh)signaling. May participate in the trafficking and/or retention of GLI2 and GLI3 proteins at the ciliary tip. The sequence is that of LisH domain-containing protein ARMC9 (ARMC9) from Pongo abelii (Sumatran orangutan).